The chain runs to 230 residues: Ion-translocating oxidoreductase complex subunit E (230 aa).

The next 6 helical transmembrane spans lie at alanine 18–alanine 38, leucine 39–leucine 59, threonine 63–valine 83, leucine 86–valine 106, tryptophan 125–leucine 145, and proline 182–valine 202.

It belongs to the NqrDE/RnfAE family. In terms of assembly, the complex is composed of six subunits: RsxA, RsxB, RsxC, RsxD, RsxE and RsxG.

Its subcellular location is the cell inner membrane. In terms of biological role, part of a membrane-bound complex that couples electron transfer with translocation of ions across the membrane. Required to maintain the reduced state of SoxR. The polypeptide is Ion-translocating oxidoreductase complex subunit E (Salmonella arizonae (strain ATCC BAA-731 / CDC346-86 / RSK2980)).